A 132-amino-acid chain; its full sequence is CDGSH iron-sulfur domain-containing protein 2 homolog (132 aa).

Topologically, residues 1 to 35 (MEPISHVVKSSLPNYLSSLPIPDSFGGWFKLSFKD) are lumenal. The helical transmembrane segment at 36 to 58 (WLALIPPTVVVAGLGYTTYLAFC) threads the bilayer. Residues 59 to 132 (PAARCAGKDS…NVGPVVVKKK (74 aa)) are Cytoplasmic-facing. [2Fe-2S] cluster is bound by residues C98, C100, C109, and H113.

The protein belongs to the CISD protein family. CISD2 subfamily. Requires [2Fe-2S] cluster as cofactor.

It localises to the endoplasmic reticulum membrane. The chain is CDGSH iron-sulfur domain-containing protein 2 homolog from Drosophila persimilis (Fruit fly).